A 355-amino-acid polypeptide reads, in one-letter code: Proto-oncogene Wnt-3 (355 aa).

The signal sequence occupies residues 1–21 (MEPHLLGLLLGLLLSGTRVLA). 11 cysteine pairs are disulfide-bonded: C80–C91, C131–C139, C141–C158, C206–C220, C208–C215, C284–C315, C300–C310, C314–C354, C330–C345, C332–C342, and C337–C338. N90 carries an N-linked (GlcNAc...) asparagine glycan. The O-palmitoleoyl serine; by PORCN moiety is linked to residue S212. N-linked (GlcNAc...) asparagine glycosylation occurs at N301.

It belongs to the Wnt family. Forms a soluble 1:1 complex with AFM; this prevents oligomerization and is required for prolonged biological activity. The complex with AFM may represent the physiological form in body fluids. Interacts with PORCN. Interacts with WLS. Post-translationally, palmitoleoylation is required for efficient binding to frizzled receptors. Depalmitoleoylation leads to Wnt signaling pathway inhibition. In terms of tissue distribution, detected at low levels in adult brain. Dorsal portion of the neural tube, dorsal ectoderm, the branchial arches, and the limb buds.

Its subcellular location is the secreted. It localises to the extracellular space. The protein resides in the extracellular matrix. Ligand for members of the frizzled family of seven transmembrane receptors. Functions in the canonical Wnt signaling pathway that results in activation of transcription factors of the TCF/LEF family. Required for normal gastrulation, formation of the primitive streak, and for the formation of the mesoderm during early embryogenesis. Required for normal formation of the apical ectodermal ridge and for normal embryonic limb development. This is Proto-oncogene Wnt-3 (Wnt3) from Mus musculus (Mouse).